The sequence spans 433 residues: Glutamate-rich protein 2 (433 aa).

5 disordered regions span residues 56–86 (VPAA…LAPP), 113–161 (DSAS…KHPQ), 189–273 (SRQN…SIET), 308–344 (CLED…TRAP), and 394–433 (EKAQ…EDGS). Pro residues predominate over residues 63 to 85 (PAPPPPRALRPAPGPPRSAPLAP). Over residues 114 to 127 (SASQARGSEPSSSA) the composition is skewed to polar residues. Basic and acidic residues-rich tracts occupy residues 199-214 (DPKE…EKPQ) and 244-258 (ARKE…DKVS). Positions 259-273 (LKSSENRPSSRSIET) are enriched in polar residues. Acidic residues-rich tracts occupy residues 308 to 334 (CLED…EDDE) and 397 to 433 (QEEE…EDGS).

This Rattus norvegicus (Rat) protein is Glutamate-rich protein 2 (Erich2).